Consider the following 276-residue polypeptide: NADPH-dependent 7-cyano-7-deazaguanine reductase (276 aa).

I83–S85 is a binding site for substrate. Residue S85–K86 participates in NADPH binding. Catalysis depends on C184, which acts as the Thioimide intermediate. Residue D191 is the Proton donor of the active site. A substrate-binding site is contributed by H223–E224. R252–G253 is a binding site for NADPH.

The protein belongs to the GTP cyclohydrolase I family. QueF type 2 subfamily. As to quaternary structure, homodimer.

It localises to the cytoplasm. The catalysed reaction is 7-aminomethyl-7-carbaguanine + 2 NADP(+) = 7-cyano-7-deazaguanine + 2 NADPH + 3 H(+). The protein operates within tRNA modification; tRNA-queuosine biosynthesis. Its function is as follows. Catalyzes the NADPH-dependent reduction of 7-cyano-7-deazaguanine (preQ0) to 7-aminomethyl-7-deazaguanine (preQ1). The chain is NADPH-dependent 7-cyano-7-deazaguanine reductase from Pseudomonas fluorescens (strain SBW25).